Consider the following 321-residue polypeptide: Sex-lethal homolog (321 aa).

RRM domains lie at 78-156 (TNLI…FARP) and 164-244 (TNLY…VAEE).

In terms of tissue distribution, expressed in gonads and somatic tissues of both sexes. In the ovary, expressed in the last egg chamber of each ovariole. Highly expressed in nurse cells with low expression found in oocytes. Highly expressed in testis with lower expression in testis sheath and vas deferentia.

Its subcellular location is the nucleus. Its function is as follows. Unknown; apparently not involved in somatic sex determination. The polypeptide is Sex-lethal homolog (SXL) (Megaselia scalaris (Humpbacked fly)).